We begin with the raw amino-acid sequence, 308 residues long: 2-methylisocitrate lyase (308 aa).

51–53 contributes to the substrate binding site; the sequence is SGA. Positions 90 and 92 each coordinate Mg(2+). Residues 127-128, Arg160, Glu190, 212-214, Arg243, and Arg272 each bind substrate; these read CG and NMT.

It belongs to the isocitrate lyase/PEP mutase superfamily. Methylisocitrate lyase family. Homotetramer; dimer of dimers. The cofactor is Mg(2+).

It carries out the reaction (2S,3R)-3-hydroxybutane-1,2,3-tricarboxylate = pyruvate + succinate. Its pathway is organic acid metabolism; propanoate degradation. Functionally, involved in the catabolism of short chain fatty acids (SCFA) via the 2-methylcitrate cycle I (propionate degradation route). Catalyzes the thermodynamically favored C-C bond cleavage of (2R,3S)-2-methylisocitrate to yield pyruvate and succinate via an alpha-carboxy-carbanion intermediate. The sequence is that of 2-methylisocitrate lyase from Aeropyrum pernix (strain ATCC 700893 / DSM 11879 / JCM 9820 / NBRC 100138 / K1).